The following is a 133-amino-acid chain: ATP synthase epsilon chain (133 aa).

The protein belongs to the ATPase epsilon chain family. F-type ATPases have 2 components, CF(1) - the catalytic core - and CF(0) - the membrane proton channel. CF(1) has five subunits: alpha(3), beta(3), gamma(1), delta(1), epsilon(1). CF(0) has three main subunits: a, b and c.

The protein localises to the cell inner membrane. Its function is as follows. Produces ATP from ADP in the presence of a proton gradient across the membrane. This is ATP synthase epsilon chain from Maricaulis maris (strain MCS10) (Caulobacter maris).